Consider the following 533-residue polypeptide: CTP synthase (533 aa).

Residues 1-270 (MVHLAKYIVV…GDYIVRRIEL (270 aa)) are amidoligase domain. S16 is a binding site for CTP. S16 is a UTP binding site. Residue 17–22 (SIGKGI) participates in ATP binding. Y57 contributes to the L-glutamine binding site. D74 is an ATP binding site. The Mg(2+) site is built by D74 and E144. Residues 151–153 (DIE), 191–196 (KTKPTQ), and K227 each bind CTP. Residues 191–196 (KTKPTQ) and K227 contribute to the UTP site. The Glutamine amidotransferase type-1 domain occupies 303-533 (YVELEDSYIS…FLRAALERSR (231 aa)). G355 contacts L-glutamine. The active-site Nucleophile; for glutamine hydrolysis is the C382. Residues 383-386 (LGMQ), E405, and R462 contribute to the L-glutamine site. Active-site residues include H507 and E509.

Belongs to the CTP synthase family. Homotetramer.

The catalysed reaction is UTP + L-glutamine + ATP + H2O = CTP + L-glutamate + ADP + phosphate + 2 H(+). The enzyme catalyses L-glutamine + H2O = L-glutamate + NH4(+). It carries out the reaction UTP + NH4(+) + ATP = CTP + ADP + phosphate + 2 H(+). The protein operates within pyrimidine metabolism; CTP biosynthesis via de novo pathway; CTP from UDP: step 2/2. Allosterically activated by GTP, when glutamine is the substrate; GTP has no effect on the reaction when ammonia is the substrate. The allosteric effector GTP functions by stabilizing the protein conformation that binds the tetrahedral intermediate(s) formed during glutamine hydrolysis. Inhibited by the product CTP, via allosteric rather than competitive inhibition. In terms of biological role, catalyzes the ATP-dependent amination of UTP to CTP with either L-glutamine or ammonia as the source of nitrogen. Regulates intracellular CTP levels through interactions with the four ribonucleotide triphosphates. The polypeptide is CTP synthase (Methanothermobacter thermautotrophicus (strain ATCC 29096 / DSM 1053 / JCM 10044 / NBRC 100330 / Delta H) (Methanobacterium thermoautotrophicum)).